Here is a 274-residue protein sequence, read N- to C-terminus: E3 ubiquitin-protein ligase complex SLX5-SLX8 subunit SLX8 (274 aa).

2 disordered regions span residues 1–117 (MARR…GNNI) and 136–159 (ANTP…TNSK). Positions 13–28 (ENLRIKRVRLESVRQN) are enriched in basic and acidic residues. The residue at position 50 (Ser-50) is a Phosphoserine. At Thr-66 the chain carries Phosphothreonine. Acidic residues predominate over residues 66–75 (TSEEDGDDDL). Residue Ser-67 is modified to Phosphoserine. The segment covering 97 to 108 (GNHDRETMHTEE) has biased composition (basic and acidic residues). The RING-type zinc-finger motif lies at 206–250 (CPICFEPPETALMTLCGHVFCCPCLFQMVNSSRTCRQFGHCALCR).

In terms of assembly, component of the heterodimeric SUMO-targeted ubiquitin ligase (STUbL) complex composed of SLX5 and SLX8.

Its subcellular location is the nucleus. It localises to the chromosome. The protein localises to the centromere. The protein resides in the kinetochore. The enzyme catalyses S-ubiquitinyl-[E2 ubiquitin-conjugating enzyme]-L-cysteine + [acceptor protein]-L-lysine = [E2 ubiquitin-conjugating enzyme]-L-cysteine + N(6)-ubiquitinyl-[acceptor protein]-L-lysine.. It functions in the pathway protein modification; protein ubiquitination. In terms of biological role, component of the SUMO-targeted ubiquitin ligase (STUbL) complex SLX5/SLX8 that mediates ubiquitination and subsequent desumoylation of sumoylated proteins and proteins containing SUMO-like domains for their degradation. The STUbL complex SLX5/SLX8 stimulates ubiquitin conjugating enzymes, including UBC1, UBC4, UBC5 and UBC13-MMS2, and mediates the proteolytic down-regulation of sumoylated proteins. The STUbL complex SLX5/SLX8 is involved in ubiquitin-mediated degradation of histone variant CSE4, preventing mislocalization to euchromatin. The complex plays an essential role in maintenance of chromosome stability and links SUMO-dependent ubiquitination to a centromere-specific function during mitosis. The complex is involved in proteolysis of spindle positioning protein KAR9 and ensures correct spindle function by regulating levels of microtubule-associated proteins. During replication, the complex helps to prevent DNA lesions via recombination and has a role in localizing the DNA damage protein DCD2. The complex especially ubiquitinates the nuclease YEN1 and prevents persistent accumulation of a fraction of YEN1 associated with sites of activity in late G2/M and helps maintain the balance between pro- and anti-crossover pathways during homologous recombination. It is also involved in ubiquitin-mediated degradation of DNA repair proteins RAD52 and RAD57. Finally, the complex is recruited to distinct genomic hotspots of non-H2B protein ubiquitination (ub-hotspots) by the sumoylated transcription factor-like protein EUC1 where it ubiquitinates EUC1 and presumably other targets. This chain is E3 ubiquitin-protein ligase complex SLX5-SLX8 subunit SLX8 (SLX8), found in Saccharomyces cerevisiae (strain ATCC 204508 / S288c) (Baker's yeast).